We begin with the raw amino-acid sequence, 914 residues long: Protein ECT2 (914 aa).

N-acetylalanine is present on Ala-2. 2 consecutive BRCT domains span residues 171-260 and 266-354; these read LYCT…AAVD and FKVP…MYLY. Thr-359 is modified (phosphothreonine; by PKC/PRKCI). Ser-367 and Ser-370 each carry phosphoserine. Thr-373 carries the post-translational modification Phosphothreonine; by CDK1. The residue at position 376 (Ser-376) is a Phosphoserine. 2 consecutive short sequence motifs (nuclear localization signal) follow at residues 378 to 382 and 401 to 405; these read RKRRR and PRKRP. A disordered region spans residues 388-449; sequence AQLSRETDVS…SKSSTPVPSK (62 aa). Residues 418–429 are compositionally biased toward polar residues; it reads DISNTPESSINY. The span at 432-449 shows a compositional bias: low complexity; that stretch reads TPKSCTKSSKSSTPVPSK. Thr-444 carries the phosphothreonine; by CDK1 modification. The region spanning 452–641 is the DH domain; sequence ARWQVAKELY…KEVMTHINED (190 aa). Lys-611 participates in a covalent cross-link: Glycyl lysine isopeptide (Lys-Gly) (interchain with G-Cter in SUMO2). Residues 675-794 enclose the PH domain; that stretch reads RVETISLGEH…KMLCRHVANT (120 aa). 2 positions are modified to phosphoserine: Ser-716 and Ser-842. The residue at position 846 (Thr-846) is a Phosphothreonine; by CDK1. The segment at 857–884 is disordered; it reads TSHGSVEGRSPSSNDKHVMSRLSSTSSL. Residues Ser-861 and Ser-866 each carry the phosphoserine modification.

As to quaternary structure, homodimer. Homooligomer. Found in the centralspindlin complex. Interacts with NR1I3. Interacts (Thr-359 phosphorylated form) with PARD6A; the interaction is observed in cancer cells. Interacts (Thr-359 phosphorylated form) with PRKCI; the interaction is observed in cancer cells. Interacts with PKP4; the interaction is observed at the midbody. Interacts with RACGAP1/CYK4; the interaction is direct, occurs in a microtubule-dependent manner, occurs at anaphase and during cytokinesis, is inhibited in metaphase by phosphorylation of ECT2 on Thr-373 and is stimulated in early anaphase by dephosphorylation of ECT2 probably on Thr-373 through CDK1 activity. Interacts with PLK1; the interaction is stimulated upon its phosphorylation on Thr-444. Interacts with RHOA; the interaction results in allosteric activation of ECT2. Interacts with KIF23, PARD3, PARD6B and PRKCQ. Interacts with NEDD9/HEF1. Phosphorylated by PLK1 in vitro. Hyperphosphorylated during the G2 phase of the cell cycle. Phosphorylation at Thr-373 occurs during the G2/M phase, relieves its auto-inhibition status and stimulates its GEF activity. Phosphorylation at Thr-444 in G2/M phase is required for subsequent binding with PLK1 and Rho exchange activation. Dephosphorylated at the time of cytokinesis. Phosphorylation at Thr-359 is required for its transformation activity in cancer cells. Expressed in lung epithelial cells (at protein level). Expressed in squamous cell carcinoma, primary non-small cell lung cancer tumors and lung adenocarcinoma.

It is found in the nucleus. Its subcellular location is the cytoplasm. It localises to the cytoskeleton. The protein resides in the spindle. The protein localises to the cleavage furrow. It is found in the midbody. Its subcellular location is the cell junction. It localises to the tight junction. The protein resides in the microtubule organizing center. The protein localises to the centrosome. Autoinhibited by the C-terminal PH domain which folds back and binds to the surface of the DH domain, blocking binding of RHOA to the catalytic center of the DH domain. The 2nd BRCT domain is also involved in inhibition, probably by helping to impede RHOA binding. Allosterically activated by binding of activated GTP-bound RHOA to the PH domain which stimulates the release of PH inhibition and promotes the binding of substrate RHOA to the catalytic center. Binding of phosphorylated RACGAP1 to the N-terminal BRCT domain-containing region also releases autoinhibition. Its function is as follows. Guanine nucleotide exchange factor (GEF) that catalyzes the exchange of GDP for GTP. Promotes guanine nucleotide exchange on the Rho family members of small GTPases, like RHOA, RHOC, RAC1 and CDC42. Required for signal transduction pathways involved in the regulation of cytokinesis. Component of the centralspindlin complex that serves as a microtubule-dependent and Rho-mediated signaling required for the myosin contractile ring formation during the cell cycle cytokinesis. Regulates the translocation of RHOA from the central spindle to the equatorial region. Plays a role in the control of mitotic spindle assembly; regulates the activation of CDC42 in metaphase for the process of spindle fibers attachment to kinetochores before chromosome congression. Involved in the regulation of epithelial cell polarity; participates in the formation of epithelial tight junctions in a polarity complex PARD3-PARD6-protein kinase PRKCQ-dependent manner. Plays a role in the regulation of neurite outgrowth. Inhibits phenobarbital (PB)-induced NR1I3 nuclear translocation. Stimulates the activity of RAC1 through its association with the oncogenic PARD6A-PRKCI complex in cancer cells, thereby acting to coordinately drive tumor cell proliferation and invasion. Also stimulates genotoxic stress-induced RHOB activity in breast cancer cells leading to their cell death. The protein is Protein ECT2 of Homo sapiens (Human).